Consider the following 518-residue polypeptide: 2-isopropylmalate synthase (518 aa).

The Pyruvate carboxyltransferase domain occupies 5–269 (IIVLDTTLRD…STNVRLKELI (265 aa)). Positions 14, 204, 206, and 240 each coordinate Mn(2+). Residues 397-518 (ELDSFQVVTN…HDSQAPVSAR (122 aa)) form a regulatory domain region.

This sequence belongs to the alpha-IPM synthase/homocitrate synthase family. LeuA type 1 subfamily. As to quaternary structure, homodimer. Mn(2+) is required as a cofactor.

The protein localises to the cytoplasm. The catalysed reaction is 3-methyl-2-oxobutanoate + acetyl-CoA + H2O = (2S)-2-isopropylmalate + CoA + H(+). It participates in amino-acid biosynthesis; L-leucine biosynthesis; L-leucine from 3-methyl-2-oxobutanoate: step 1/4. Its function is as follows. Catalyzes the condensation of the acetyl group of acetyl-CoA with 3-methyl-2-oxobutanoate (2-ketoisovalerate) to form 3-carboxy-3-hydroxy-4-methylpentanoate (2-isopropylmalate). The protein is 2-isopropylmalate synthase of Geobacillus sp. (strain Y412MC10).